The chain runs to 215 residues: Small ribosomal subunit protein uS7 (215 aa).

Belongs to the universal ribosomal protein uS7 family. In terms of assembly, part of the 30S ribosomal subunit.

One of the primary rRNA binding proteins, it binds directly to 16S rRNA where it nucleates assembly of the head domain of the 30S subunit. Is located at the subunit interface close to the decoding center. The chain is Small ribosomal subunit protein uS7 from Thermococcus gammatolerans (strain DSM 15229 / JCM 11827 / EJ3).